A 769-amino-acid chain; its full sequence is Serine/threonine-protein kinase PLK4 (769 aa).

The region spanning 10–263 is the Protein kinase domain; it reads YEVYEILGKG…LDQVLQHPFM (254 aa). ATP contacts are provided by residues 16-24 and K39; that span reads LGKGGFASV. The active-site Proton acceptor is D134. 3 disordered regions span residues 280 to 304, 337 to 380, and 592 to 651; these read SSDS…SSYG, PQQR…LDIP, and APLT…VLSS. Residues 337 to 371 are compositionally biased toward polar residues; that stretch reads PQQRPQSASHNKPTSDFFSGISNDPRTMAPSSPTK. In terms of domain architecture, Cryptic POLO box 1 (CPB1) spans 374-491; that stretch reads KKRLDIPPLN…ARFVQMVKAK (118 aa). A Cryptic POLO box 2 (CPB2) domain is found at 492-595; sequence TPKITYYSEK…GRRPANAPLT (104 aa). Residues 605 to 648 show a composition bias toward polar residues; it reads TKENQLYSNISSPNTPQTPHQMPSFAMSTASHTSAGNPLTQRPV. The POLO box domain occupies 662-745; that stretch reads AMKKCTIAGV…MPAILRELNA (84 aa).

The protein belongs to the protein kinase superfamily. Ser/Thr protein kinase family. CDC5/Polo subfamily. As to quaternary structure, homodimer. Post-translationally, ubiquitinated; leading to its degradation by the proteasome.

Its subcellular location is the cytoplasm. It is found in the cytoskeleton. The protein localises to the microtubule organizing center. The protein resides in the centrosome. It localises to the centriole. It carries out the reaction L-seryl-[protein] + ATP = O-phospho-L-seryl-[protein] + ADP + H(+). The enzyme catalyses L-threonyl-[protein] + ATP = O-phospho-L-threonyl-[protein] + ADP + H(+). In terms of biological role, serine/threonine-protein kinase that plays a central role in centriole duplication. Able to trigger procentriole formation on the surface of the mother centriole cylinder, leading to the recruitment of centriole biogenesis proteins. When overexpressed, it is able to induce centrosome amplification through the simultaneous generation of multiple procentrioles adjoining each parental centriole during S phase. This Aedes aegypti (Yellowfever mosquito) protein is Serine/threonine-protein kinase PLK4 (SAK).